Reading from the N-terminus, the 528-residue chain is Aspartic proteinase-like protein 1 (528 aa).

Residues 1–22 (MVSRSAFLLFCVLFLATEETLA) form the signal peptide. The region spanning 100–449 (HYTWIDIGTP…DRENMKLGWS (350 aa)) is the Peptidase A1 domain. D118 is an active-site residue. 2 N-linked (GlcNAc...) asparagine glycosylation sites follow: N193 and N217. D333 is a catalytic residue. N-linked (GlcNAc...) asparagine glycosylation is found at N358 and N391. The tract at residues 451 to 503 (SKCQEDKIEPPQASPGSTSSPNPLPTDEQQSRGGHAVSPAIAGKTPSKTPSSS) is disordered. Residues 464–482 (SPGSTSSPNPLPTDEQQSR) show a composition bias toward polar residues. Low complexity predominate over residues 494–503 (KTPSKTPSSS). The GPI-anchor amidated serine moiety is linked to residue S503. Positions 504–528 (SSYSFSSIMRLFNSLLLLHWLASLM) are cleaved as a propeptide — removed in mature form.

Belongs to the peptidase A1 family.

It localises to the cell membrane. The polypeptide is Aspartic proteinase-like protein 1 (Arabidopsis thaliana (Mouse-ear cress)).